Reading from the N-terminus, the 938-residue chain is Mediator of RNA polymerase II transcription subunit 16 (938 aa).

This sequence belongs to the Mediator complex subunit 16 family. Component of the Mediator complex.

The protein resides in the nucleus. Functionally, component of the Mediator complex, a coactivator involved in the regulated transcription of nearly all RNA polymerase II-dependent genes. Mediator functions as a bridge to convey information from gene-specific regulatory proteins to the basal RNA polymerase II transcription machinery. Mediator is recruited to promoters by direct interactions with regulatory proteins and serves as a scaffold for the assembly of a functional preinitiation complex with RNA polymerase II and the general transcription factors. This Eremothecium gossypii (strain ATCC 10895 / CBS 109.51 / FGSC 9923 / NRRL Y-1056) (Yeast) protein is Mediator of RNA polymerase II transcription subunit 16 (SIN4).